Here is a 470-residue protein sequence, read N- to C-terminus: Calcitonin gene-related peptide type 1 receptor (470 aa).

The first 23 residues, 1 to 23 (MTASCWTICLFLLGSVTEFIVLA), serve as a signal peptide directing secretion. The Extracellular portion of the chain corresponds to 24–147 (SPEVNESQQQ…HTTEGRRTAM (124 aa)). Residues Asn-28, Asn-74, Asn-126, and Asn-131 are each glycosylated (N-linked (GlcNAc...) asparagine). 3 cysteine pairs are disulfide-bonded: Cys-56–Cys-82, Cys-73–Cys-113, and Cys-96–Cys-135. A helical transmembrane segment spans residues 148 to 172 (NLFYLALIGHGLSLTSLFISLGIFF). The Cytoplasmic portion of the chain corresponds to 173–183 (HFKSLSCQRIT). A helical transmembrane segment spans residues 184 to 206 (LHKNLFFSFVLNSIITIIWLTAV). Residues 207–217 (ANNQELVQQNP) lie on the Extracellular side of the membrane. The helical transmembrane segment at 218-246 (ISCKISQFIHLYIFGCNYFWMLCEGIYLH) threads the bilayer. At 247 to 260 (TLIVVAVFAEKQHL) the chain is on the cytoplasmic side. The chain crosses the membrane as a helical span at residues 261–281 (MWYYLLGWGFPLIPATIHAVA). Residues 282–297 (RSYYYNDNCWISSNTS) lie on the Extracellular side of the membrane. Asn-295 carries N-linked (GlcNAc...) asparagine glycosylation. The helical transmembrane segment at 298–322 (LLYIIHGPICAAMLVNLFFLLNIVR) threads the bilayer. The Cytoplasmic segment spans residues 323-337 (VLITKLKVTHQAKSS). The chain crosses the membrane as a helical span at residues 338-359 (LYMKAVRATLILVPLLGIQYVL). The Extracellular portion of the chain corresponds to 360-374 (LPYKPSGRVSAEIYD). Residues 375-395 (YIMHILMHYQGLLVATIFCFF) form a helical membrane-spanning segment. At 396–470 (NGEVQAVLRR…AIIKPENPFA (75 aa)) the chain is on the cytoplasmic side.

Belongs to the G-protein coupled receptor 2 family.

The protein localises to the cell membrane. Functionally, may function as G protein-coupled receptor for calcitonin-gene-related peptides and adrenomedullin. Specificity may be modulated by accessory proteins. May activate cAMP-dependent pathway. The chain is Calcitonin gene-related peptide type 1 receptor (calcrla) from Danio rerio (Zebrafish).